The following is a 238-amino-acid chain: Immunoglobulin superfamily member 6 (238 aa).

A signal peptide spans 1–27 (MGPVSTSRRGLRLGISLILLQVGVVGA). At 28–153 (CTVSVLQPGY…RLFSREVHSL (126 aa)) the chain is on the extracellular side. The region spanning 30–134 (VSVLQPGYLE…EPVPTAKQTG (105 aa)) is the Ig-like C2-type domain. Cys51 and Cys118 form a disulfide bridge. A helical membrane pass occupies residues 154–174 (LIVLLALLAVYVTGVCVIFIV). The Cytoplasmic portion of the chain corresponds to 175–238 (LFRSKSNTPR…RKALPSPGRP (64 aa)). Basic and acidic residues predominate over residues 215–230 (ETSHQPEQDGNYENRK). Positions 215–238 (ETSHQPEQDGNYENRKALPSPGRP) are disordered.

Its subcellular location is the membrane. The chain is Immunoglobulin superfamily member 6 (Igsf6) from Rattus norvegicus (Rat).